The chain runs to 404 residues: Acetate kinase (404 aa).

Residue Asn-8 coordinates Mg(2+). Lys-15 contacts ATP. Arg-92 provides a ligand contact to substrate. Asp-149 functions as the Proton donor/acceptor in the catalytic mechanism. ATP contacts are provided by residues His-207 to Gly-211, Asp-282 to Arg-284, and Gly-327 to Asn-331. Residue Glu-378 coordinates Mg(2+).

This sequence belongs to the acetokinase family. Homodimer. Mg(2+) is required as a cofactor. Mn(2+) serves as cofactor.

It is found in the cytoplasm. The catalysed reaction is acetate + ATP = acetyl phosphate + ADP. It functions in the pathway metabolic intermediate biosynthesis; acetyl-CoA biosynthesis; acetyl-CoA from acetate: step 1/2. Catalyzes the formation of acetyl phosphate from acetate and ATP. Can also catalyze the reverse reaction. The sequence is that of Acetate kinase from Nitrobacter hamburgensis (strain DSM 10229 / NCIMB 13809 / X14).